The primary structure comprises 687 residues: DNA-directed RNA polymerase subunit beta' (687 aa).

Zn(2+)-binding residues include Cys-69, Cys-71, Cys-87, and Cys-90. Mg(2+) is bound by residues Asp-493, Asp-495, and Asp-497.

The protein belongs to the RNA polymerase beta' chain family. RpoC1 subfamily. In plastids the minimal PEP RNA polymerase catalytic core is composed of four subunits: alpha, beta, beta', and beta''. When a (nuclear-encoded) sigma factor is associated with the core the holoenzyme is formed, which can initiate transcription. Mg(2+) serves as cofactor. It depends on Zn(2+) as a cofactor.

The protein resides in the plastid. Its subcellular location is the chloroplast. The enzyme catalyses RNA(n) + a ribonucleoside 5'-triphosphate = RNA(n+1) + diphosphate. Functionally, DNA-dependent RNA polymerase catalyzes the transcription of DNA into RNA using the four ribonucleoside triphosphates as substrates. This chain is DNA-directed RNA polymerase subunit beta', found in Angiopteris evecta (Mule's foot fern).